The sequence spans 124 residues: Small ribosomal subunit protein uS12 (124 aa).

The interval 1–25 (MPTINQLIRKPRKSQKEKTASPALQ) is disordered. 3-methylthioaspartic acid is present on D89.

The protein belongs to the universal ribosomal protein uS12 family. Part of the 30S ribosomal subunit. Contacts proteins S8 and S17. May interact with IF1 in the 30S initiation complex.

Functionally, with S4 and S5 plays an important role in translational accuracy. Interacts with and stabilizes bases of the 16S rRNA that are involved in tRNA selection in the A site and with the mRNA backbone. Located at the interface of the 30S and 50S subunits, it traverses the body of the 30S subunit contacting proteins on the other side and probably holding the rRNA structure together. The combined cluster of proteins S8, S12 and S17 appears to hold together the shoulder and platform of the 30S subunit. This is Small ribosomal subunit protein uS12 from Borrelia turicatae (strain 91E135).